The primary structure comprises 978 residues: Peroxisomal ATPase PEX6 (978 aa).

The residue at position 119 (R119) is an Omega-N-methylarginine. ATP contacts are provided by residues 470–477 and 742–749; these read GPPGSGKT and GPPGTGKT.

Belongs to the AAA ATPase family. Interacts with PEX1; forming the PEX1-PEX6 AAA ATPase complex, which is composed of a heterohexamer formed by a trimer of PEX1-PEX6 dimers. Interacts with PEX26; interaction is direct and promotes recruitment to peroxisomal membranes. Interacts with ZFAND6.

The protein localises to the cytoplasm. The protein resides in the cytosol. It localises to the peroxisome membrane. Its subcellular location is the cell projection. It is found in the cilium. The protein localises to the photoreceptor outer segment. The catalysed reaction is ATP + H2O = ADP + phosphate + H(+). Component of the PEX1-PEX6 AAA ATPase complex, a protein dislocase complex that mediates the ATP-dependent extraction of the PEX5 receptor from peroxisomal membranes, an essential step for PEX5 recycling. Specifically recognizes PEX5 monoubiquitinated at 'Cys-11', and pulls it out of the peroxisome lumen through the PEX2-PEX10-PEX12 retrotranslocation channel. Extraction by the PEX1-PEX6 AAA ATPase complex is accompanied by unfolding of the TPR repeats and release of bound cargo from PEX5. The protein is Peroxisomal ATPase PEX6 of Rattus norvegicus (Rat).